Consider the following 368-residue polypeptide: BTB/POZ and TAZ domain-containing protein 5 (368 aa).

The segment at 1–25 is disordered; it reads MENMDDFSPENVLAPPPPPPPMKKS. Residues 55–123 enclose the BTB domain; that stretch reads ADVLIHTDDN…LYSSCYEKQD (69 aa). The TAZ-type zinc-finger motif lies at 233-324; the sequence is QTYTQLYEAM…SEQCKVPLCS (92 aa). Residues 335 to 358 are caM-binding; that stretch reads RKDEKRWKLLVRNVLSTKRIGGSP.

As to quaternary structure, interacts with CUL3A. Preferentially expressed in young leaves, roots and stems.

It localises to the cytoplasm. The protein operates within protein modification; protein ubiquitination. Functionally, may act as a substrate-specific adapter of an E3 ubiquitin-protein ligase complex (CUL3-RBX1-BTB) which mediates the ubiquitination and subsequent proteasomal degradation of target proteins. This chain is BTB/POZ and TAZ domain-containing protein 5 (BT5), found in Arabidopsis thaliana (Mouse-ear cress).